The primary structure comprises 271 residues: Acyl-[acyl-carrier-protein]--UDP-N-acetylglucosamine O-acyltransferase (271 aa).

The protein belongs to the transferase hexapeptide repeat family. LpxA subfamily. As to quaternary structure, homotrimer.

It is found in the cytoplasm. It catalyses the reaction a (3R)-hydroxyacyl-[ACP] + UDP-N-acetyl-alpha-D-glucosamine = a UDP-3-O-[(3R)-3-hydroxyacyl]-N-acetyl-alpha-D-glucosamine + holo-[ACP]. The protein operates within glycolipid biosynthesis; lipid IV(A) biosynthesis; lipid IV(A) from (3R)-3-hydroxytetradecanoyl-[acyl-carrier-protein] and UDP-N-acetyl-alpha-D-glucosamine: step 1/6. Its function is as follows. Involved in the biosynthesis of lipid A, a phosphorylated glycolipid that anchors the lipopolysaccharide to the outer membrane of the cell. This Ralstonia nicotianae (strain ATCC BAA-1114 / GMI1000) (Ralstonia solanacearum) protein is Acyl-[acyl-carrier-protein]--UDP-N-acetylglucosamine O-acyltransferase.